The chain runs to 201 residues: Imidazole glycerol phosphate synthase subunit HisH (201 aa).

The Glutamine amidotransferase type-1 domain occupies 2–201 (KVVILDTGCA…ARLLKNFLEM (200 aa)). Cys-77 functions as the Nucleophile in the catalytic mechanism. Active-site residues include His-183 and Glu-185.

As to quaternary structure, heterodimer of HisH and HisF.

It is found in the cytoplasm. It carries out the reaction 5-[(5-phospho-1-deoxy-D-ribulos-1-ylimino)methylamino]-1-(5-phospho-beta-D-ribosyl)imidazole-4-carboxamide + L-glutamine = D-erythro-1-(imidazol-4-yl)glycerol 3-phosphate + 5-amino-1-(5-phospho-beta-D-ribosyl)imidazole-4-carboxamide + L-glutamate + H(+). The enzyme catalyses L-glutamine + H2O = L-glutamate + NH4(+). Its pathway is amino-acid biosynthesis; L-histidine biosynthesis; L-histidine from 5-phospho-alpha-D-ribose 1-diphosphate: step 5/9. IGPS catalyzes the conversion of PRFAR and glutamine to IGP, AICAR and glutamate. The HisH subunit catalyzes the hydrolysis of glutamine to glutamate and ammonia as part of the synthesis of IGP and AICAR. The resulting ammonia molecule is channeled to the active site of HisF. This Photorhabdus laumondii subsp. laumondii (strain DSM 15139 / CIP 105565 / TT01) (Photorhabdus luminescens subsp. laumondii) protein is Imidazole glycerol phosphate synthase subunit HisH.